A 236-amino-acid chain; its full sequence is Ribosome maturation protein SDO1 homolog (236 aa).

It belongs to the SDO1/SBDS family.

In Pyrococcus abyssi (strain GE5 / Orsay), this protein is Ribosome maturation protein SDO1 homolog.